Reading from the N-terminus, the 854-residue chain is Protein mono-ADP-ribosyltransferase PARP9 (854 aa).

Macro domains lie at 107–296 and 306–487; these read LQVF…EFIL and TPSF…AKRS. The PARP catalytic domain occupies 628-850; that stretch reads IQQQKTQDEM…QHPWRGFASG (223 aa).

This sequence belongs to the ARTD/PARP family. Forms a stable complex with E3 ligase DTX3L; the interaction is required for PARP9 mediated ADP-ribosylation of ubiquitin. Interacts (via PARP catalytic domain) with DTX3L (via N-terminus). Forms a complex with STAT1 and DTX3L independently of IFNB1 or IFNG-mediated STAT1 'Tyr-701' phosphorylation. Forms a complex with STAT1, DTX3L and histone H2B H2BC9/H2BJ; the interaction is likely to induce H2BC9/H2BJ ubiquitination. Interacts (via N-terminus) with STAT1. Interacts with PARP14 in IFNG-stimulated macrophages; the interaction prevents PARP14-mediated STAT1 and STAT6 ADP-riboslylation. Interacts with PARP1 (when poly-ADP-ribosylated). In terms of processing, ADP-ribosylated by PARP14. As to expression, expressed in lymphocyte-rich tissues, spleen, lymph nodes, peripheral blood lymphocytes and colonic mucosa. Expressed in macrophages. Also expressed in nonhematopoietic tissues such as heart and skeletal muscle. Isoform 2 is the predominant form. Most abundantly expressed in lymphomas with a brisk host inflammatory response. In diffuse large B-cell lymphomas tumors, expressed specifically by malignant B-cells.

It is found in the cytoplasm. Its subcellular location is the cytosol. It localises to the nucleus. The enzyme catalyses [protein]-C-terminal glycine + NAD(+) = [protein]-C-terminal O-(ADP-D-ribosyl)-glycine + nicotinamide. Its activity is regulated as follows. Binding to poly(ADP-ribose) does not affect its activity. In terms of biological role, ADP-ribosyltransferase which, in association with E3 ligase DTX3L, plays a role in DNA damage repair and in immune responses including interferon-mediated antiviral defenses. Within the complex, enhances DTX3L E3 ligase activity which is further enhanced by PARP9 binding to poly(ADP-ribose). In association with DTX3L and in presence of E1 and E2 enzymes, mediates NAD(+)-dependent mono-ADP-ribosylation of ubiquitin which prevents ubiquitin conjugation to substrates such as histones. During DNA repair, PARP1 recruits PARP9/BAL1-DTX3L complex to DNA damage sites via PARP9 binding to ribosylated PARP1. Subsequent PARP1-dependent PARP9/BAL1-DTX3L-mediated ubiquitination promotes the rapid and specific recruitment of 53BP1/TP53BP1, UIMC1/RAP80, and BRCA1 to DNA damage sites. In response to DNA damage, PARP9-DTX3L complex is required for efficient non-homologous end joining (NHEJ); the complex function is negatively modulated by PARP9 activity. Dispensable for B-cell receptor (BCR) assembly through V(D)J recombination and class switch recombination (CSR). In macrophages, positively regulates pro-inflammatory cytokines production in response to IFNG stimulation by suppressing PARP14-mediated STAT1 ADP-ribosylation and thus promoting STAT1 phosphorylation. Also suppresses PARP14-mediated STAT6 ADP-ribosylation. In Homo sapiens (Human), this protein is Protein mono-ADP-ribosyltransferase PARP9 (PARP9).